We begin with the raw amino-acid sequence, 94 residues long: Venom peptide SjAPI (94 aa).

The signal sequence occupies residues 1–24; that stretch reads MKWGALLCIFGFLAFCSVLDRGLG. Positions 25–30 are excised as a propeptide; it reads WIPDIW. Disulfide bonds link Cys33/Cys70, Cys43/Cys66, Cys47/Cys62, Cys51/Cys92, and Cys72/Cys86. A TIL domain is found at 33-92; sequence CSSKNEEFQQCGSSCPETCANHKNPEPKSCAAVCFVGCVCKPGFIRDDLKGSICVKPEDC. Residues 63 to 65 are protease binding loop; the sequence is AAV.

The protein belongs to the serine protease inhibitor-like (TIL domain-containing) family. As to expression, expressed by the venom gland.

The protein localises to the secreted. In terms of biological role, recombinant protein inhibits both alpha-chymotrypsin (Ki=97.1 nM) and elastase (Ki=3700 nM). In Scorpiops jendeki (Scorpion), this protein is Venom peptide SjAPI.